Reading from the N-terminus, the 561-residue chain is Urocanate hydratase (561 aa).

NAD(+)-binding positions include 52–53, glutamine 130, 176–178, glutamate 196, arginine 201, 242–243, 263–267, 273–274, and tyrosine 322; these read GG, GMG, NA, QTSAH, and YL. The active site involves cysteine 410. Glycine 492 lines the NAD(+) pocket.

Belongs to the urocanase family. It depends on NAD(+) as a cofactor.

The protein resides in the cytoplasm. The catalysed reaction is 4-imidazolone-5-propanoate = trans-urocanate + H2O. It functions in the pathway amino-acid degradation; L-histidine degradation into L-glutamate; N-formimidoyl-L-glutamate from L-histidine: step 2/3. Catalyzes the conversion of urocanate to 4-imidazolone-5-propionate. This Enterobacter sp. (strain 638) protein is Urocanate hydratase.